The chain runs to 188 residues: Elongation factor P (188 aa).

The protein belongs to the elongation factor P family.

It is found in the cytoplasm. It participates in protein biosynthesis; polypeptide chain elongation. Involved in peptide bond synthesis. Stimulates efficient translation and peptide-bond synthesis on native or reconstituted 70S ribosomes in vitro. Probably functions indirectly by altering the affinity of the ribosome for aminoacyl-tRNA, thus increasing their reactivity as acceptors for peptidyl transferase. The chain is Elongation factor P from Methylorubrum populi (strain ATCC BAA-705 / NCIMB 13946 / BJ001) (Methylobacterium populi).